A 384-amino-acid chain; its full sequence is Farnesyl pyrophosphate synthase 1, mitochondrial (384 aa).

The isopentenyl diphosphate site is built by Lys89, Arg92, and Gln128. Mg(2+) is bound by residues Asp135 and Asp139. Residue Arg144 coordinates dimethylallyl diphosphate. Residue Arg145 participates in isopentenyl diphosphate binding. The dimethylallyl diphosphate site is built by Lys232, Thr233, Gln271, Lys288, and Lys297.

This sequence belongs to the FPP/GGPP synthase family. Requires Mg(2+) as cofactor. In terms of tissue distribution, the FPS1L mRNA accumulates preferentially in inflorescences, whereas the FPS1S mRNA is predominantly expressed in roots and inflorescences.

Its subcellular location is the mitochondrion. The protein localises to the cytoplasm. It carries out the reaction isopentenyl diphosphate + dimethylallyl diphosphate = (2E)-geranyl diphosphate + diphosphate. The catalysed reaction is isopentenyl diphosphate + (2E)-geranyl diphosphate = (2E,6E)-farnesyl diphosphate + diphosphate. Its pathway is isoprenoid biosynthesis; farnesyl diphosphate biosynthesis; farnesyl diphosphate from geranyl diphosphate and isopentenyl diphosphate: step 1/1. It functions in the pathway isoprenoid biosynthesis; geranyl diphosphate biosynthesis; geranyl diphosphate from dimethylallyl diphosphate and isopentenyl diphosphate: step 1/1. Functionally, catalyzes the sequential condensation of isopentenyl pyrophosphate with the allylic pyrophosphates, dimethylallyl pyrophosphate, and then with the resultant geranylpyrophosphate to the ultimate product farnesyl pyrophosphate. The protein is Farnesyl pyrophosphate synthase 1, mitochondrial (FPS1) of Arabidopsis thaliana (Mouse-ear cress).